We begin with the raw amino-acid sequence, 178 residues long: Ribosome maturation factor RimP (178 aa).

Belongs to the RimP family.

It localises to the cytoplasm. Required for maturation of 30S ribosomal subunits. The protein is Ribosome maturation factor RimP of Streptococcus pyogenes serotype M4 (strain MGAS10750).